The primary structure comprises 283 residues: tRNA pseudouridine synthase B (283 aa).

Asp38 serves as the catalytic Nucleophile.

The protein belongs to the pseudouridine synthase TruB family. Type 1 subfamily.

It carries out the reaction uridine(55) in tRNA = pseudouridine(55) in tRNA. Its function is as follows. Responsible for synthesis of pseudouridine from uracil-55 in the psi GC loop of transfer RNAs. In Aster yellows witches'-broom phytoplasma (strain AYWB), this protein is tRNA pseudouridine synthase B.